Reading from the N-terminus, the 273-residue chain is Holocytochrome c-type synthase (273 aa).

The segment covering 1–18 (MGLSASSPAATAQSAAEP) has biased composition (low complexity). Residues 1-39 (MGLSASSPAATAQSAAEPSKQHQVASPPSECPMHQEKMR) are disordered. HRM repeat units follow at residues 30 to 35 (ECPMHQ) and 40 to 45 (GCPMHM).

This sequence belongs to the cytochrome c-type heme lyase family.

It localises to the mitochondrion inner membrane. It catalyses the reaction holo-[cytochrome c] = apo-[cytochrome c] + heme b. Its function is as follows. Lyase that catalyzes the covalent linking of the heme group to the cytochrome C apoprotein to produce the mature functional cytochrome. The protein is Holocytochrome c-type synthase (HCCS) of Gallus gallus (Chicken).